Here is an 89-residue protein sequence, read N- to C-terminus: Small ribosomal subunit protein uS15 (89 aa).

It belongs to the universal ribosomal protein uS15 family. Part of the 30S ribosomal subunit. Forms a bridge to the 50S subunit in the 70S ribosome, contacting the 23S rRNA.

Its function is as follows. One of the primary rRNA binding proteins, it binds directly to 16S rRNA where it helps nucleate assembly of the platform of the 30S subunit by binding and bridging several RNA helices of the 16S rRNA. In terms of biological role, forms an intersubunit bridge (bridge B4) with the 23S rRNA of the 50S subunit in the ribosome. The polypeptide is Small ribosomal subunit protein uS15 (Aeromonas hydrophila subsp. hydrophila (strain ATCC 7966 / DSM 30187 / BCRC 13018 / CCUG 14551 / JCM 1027 / KCTC 2358 / NCIMB 9240 / NCTC 8049)).